We begin with the raw amino-acid sequence, 362 residues long: Fructose-bisphosphate aldolase (362 aa).

A D-glyceraldehyde 3-phosphate-binding site is contributed by serine 65. Aspartate 112 functions as the Proton donor in the catalytic mechanism. Zn(2+) contacts are provided by histidine 113, aspartate 147, glutamate 177, and histidine 229. Glycine 230 contributes to the dihydroxyacetone phosphate binding site. Histidine 268 is a Zn(2+) binding site. Dihydroxyacetone phosphate contacts are provided by residues 269 to 271 and 290 to 293; these read GGS and NVDT.

It belongs to the class II fructose-bisphosphate aldolase family. Homodimer. The cofactor is Zn(2+).

It carries out the reaction beta-D-fructose 1,6-bisphosphate = D-glyceraldehyde 3-phosphate + dihydroxyacetone phosphate. It participates in carbohydrate degradation; glycolysis; D-glyceraldehyde 3-phosphate and glycerone phosphate from D-glucose: step 4/4. Its function is as follows. Catalyzes the aldol condensation of dihydroxyacetone phosphate (DHAP or glycerone-phosphate) with glyceraldehyde 3-phosphate (G3P) to form fructose 1,6-bisphosphate (FBP) in gluconeogenesis and the reverse reaction in glycolysis. This is Fructose-bisphosphate aldolase (fbaA) from Aspergillus oryzae (strain ATCC 42149 / RIB 40) (Yellow koji mold).